Reading from the N-terminus, the 1518-residue chain is Putative cellulose synthase 3 (1518 aa).

The interval 1-731 (MYGTWFTTGK…EEKLEKQSFV (731 aa)) is catalytic. A run of 3 helical transmembrane segments spans residues 24-44 (PVWV…SVRI), 71-91 (ITVF…VWRL), and 105-125 (LAVL…LSYF). The catalytic subdomain A stretch occupies residues 144–237 (QWPSVDVFVP…FAVIFDCDHV (94 aa)). Catalysis depends on residues Asp-186 and Asp-330. A catalytic subdomain B region spans residues 314–374 (EAVMGIGGFA…GQRVRWARGM (61 aa)). The next 5 membrane-spanning stretches (helical) occupy residues 404 to 424 (FLFA…LFLG), 428 to 448 (IAAS…HSVI), 465 to 485 (IYET…LLQP), 514 to 534 (ILAG…VWQF), and 543 to 563 (FILN…SIAV). In terms of domain architecture, PilZ spans 569–668 (QTRNAPRVSV…ERQVVSMVFG (100 aa)). Residues 732-1518 (LKPVPRSARH…IARDDLTGEL (787 aa)) form a cyclic di-GMP binding domain region. Positions 765–785 (APSPDQSGVTAETPFGDSNTG) are disordered. Residues 768 to 785 (PDQSGVTAETPFGDSNTG) are compositionally biased toward polar residues. The chain crosses the membrane as a helical span at residues 1481–1501 (ALYLAGLAGAGLAALGVWAWL).

This sequence in the N-terminal section; belongs to the glycosyltransferase 2 family. It in the C-terminal section; belongs to the AcsB/BcsB family.

It localises to the cell inner membrane. It catalyses the reaction [(1-&gt;4)-beta-D-glucosyl](n) + UDP-alpha-D-glucose = [(1-&gt;4)-beta-D-glucosyl](n+1) + UDP + H(+). It functions in the pathway glycan metabolism; bacterial cellulose biosynthesis. The sequence is that of Putative cellulose synthase 3 (bcsABII-B) from Komagataeibacter xylinus (Gluconacetobacter xylinus).